Consider the following 285-residue polypeptide: Undecaprenyl-diphosphatase (285 aa).

Helical transmembrane passes span 40-60 (GPLI…VYFF), 89-109 (LFWW…AIKL), 137-157 (DLIA…DWLG), 171-191 (GLIV…RSGV), 209-229 (FSFL…VPEI), 241-261 (LIAG…LMNF), and 265-285 (ASML…LAFF).

It belongs to the UppP family.

Its subcellular location is the cell inner membrane. It catalyses the reaction di-trans,octa-cis-undecaprenyl diphosphate + H2O = di-trans,octa-cis-undecaprenyl phosphate + phosphate + H(+). Its function is as follows. Catalyzes the dephosphorylation of undecaprenyl diphosphate (UPP). Confers resistance to bacitracin. The chain is Undecaprenyl-diphosphatase from Erythrobacter litoralis (strain HTCC2594).